A 305-amino-acid polypeptide reads, in one-letter code: Sulfate adenylyltransferase subunit 2 (305 aa).

The protein belongs to the PAPS reductase family. CysD subfamily. As to quaternary structure, heterodimer composed of CysD, the smaller subunit, and CysN.

It catalyses the reaction sulfate + ATP + H(+) = adenosine 5'-phosphosulfate + diphosphate. The protein operates within sulfur metabolism; hydrogen sulfide biosynthesis; sulfite from sulfate: step 1/3. In terms of biological role, with CysN forms the ATP sulfurylase (ATPS) that catalyzes the adenylation of sulfate producing adenosine 5'-phosphosulfate (APS) and diphosphate, the first enzymatic step in sulfur assimilation pathway. APS synthesis involves the formation of a high-energy phosphoric-sulfuric acid anhydride bond driven by GTP hydrolysis by CysN coupled to ATP hydrolysis by CysD. The sequence is that of Sulfate adenylyltransferase subunit 2 from Pseudomonas savastanoi pv. phaseolicola (strain 1448A / Race 6) (Pseudomonas syringae pv. phaseolicola (strain 1448A / Race 6)).